The primary structure comprises 1904 residues: Callose synthase 10 (1904 aa).

One copy of the HAT 1 repeat lies at valine 100–arginine 132. 6 helical membrane-spanning segments follow: residues serine 491 to phenylalanine 511, alanine 532 to methionine 552, valine 562 to valine 582, phenylalanine 594 to glycine 614, tyrosine 661 to isoleucine 681, and valine 722 to glycine 742. Residues phenylalanine 678 to tryptophan 701 form an LRR 1 repeat. LRR repeat units follow at residues leucine 751–asparagine 774 and threonine 925–asparagine 948. The HAT 2 repeat unit spans residues tyrosine 1074 to arginine 1107. An LRR 4 repeat occupies phenylalanine 1159–serine 1181. A run of 9 helical transmembrane segments spans residues phenylalanine 1474–leucine 1494, phenylalanine 1529–leucine 1549, alanine 1554–leucine 1574, alanine 1621–alanine 1641, phenylalanine 1644–isoleucine 1664, leucine 1747–phenylalanine 1767, phenylalanine 1783–threonine 1803, phenylalanine 1811–tryptophan 1831, and alanine 1853–serine 1873. An HAT 3 repeat occupies leucine 1659–glycine 1691.

This sequence belongs to the glycosyltransferase 48 family.

The protein localises to the cell membrane. The catalysed reaction is [(1-&gt;3)-beta-D-glucosyl](n) + UDP-alpha-D-glucose = [(1-&gt;3)-beta-D-glucosyl](n+1) + UDP + H(+). Involved in sporophytic and gametophytic development. Required for normal plant development and for the proper accumulation of callose at cell plates, cll walls and plasmodesmata. During pollen formation, required for the entry of microspores into mitosis. During plant growth and development, callose is found as a transitory component of the cell plate in dividing cells, is a major component of pollen mother cell walls and pollen tubes, and is found as a structural component of plasmodesmatal canals. Required for proper cell division and tissue patterning throughout plant organs, including stomatal patterning. The chain is Callose synthase 10 (CALS10) from Arabidopsis thaliana (Mouse-ear cress).